The sequence spans 663 residues: Transketolase 1 (663 aa).

Position 26 (H26) interacts with substrate. K46 is modified (N6-acetyllysine). Residues H66 and 114–116 each bind thiamine diphosphate; that span reads GPL. D155 lines the Mg(2+) pocket. Thiamine diphosphate contacts are provided by G156 and N185. Mg(2+)-binding residues include N185 and I187. 3 residues coordinate substrate: H261, R358, and S385. H261 provides a ligand contact to thiamine diphosphate. Catalysis depends on E411, which acts as the Proton donor. F437 is a binding site for thiamine diphosphate. Substrate is bound by residues H461, D469, H473, and R520.

The protein belongs to the transketolase family. In terms of assembly, homodimer. The cofactor is Mg(2+). Ca(2+) serves as cofactor. Mn(2+) is required as a cofactor. Requires Co(2+) as cofactor. It depends on thiamine diphosphate as a cofactor.

The catalysed reaction is D-sedoheptulose 7-phosphate + D-glyceraldehyde 3-phosphate = aldehydo-D-ribose 5-phosphate + D-xylulose 5-phosphate. Catalyzes the transfer of a two-carbon ketol group from a ketose donor to an aldose acceptor, via a covalent intermediate with the cofactor thiamine pyrophosphate. Thus, catalyzes the reversible transfer of a two-carbon ketol group from sedoheptulose-7-phosphate to glyceraldehyde-3-phosphate, producing xylulose-5-phosphate and ribose-5-phosphate. In Escherichia coli (strain K12), this protein is Transketolase 1 (tktA).